Here is a 1137-residue protein sequence, read N- to C-terminus: AP-4 complex subunit epsilon-1 (1137 aa).

Phosphoserine is present on residues serine 700 and serine 857. The interaction with TEPSIN stretch occupies residues 727–1137 (SGALPVPQES…YQCQKVMEGS (411 aa)).

The protein belongs to the adaptor complexes large subunit family. Adaptor protein complex 4 (AP-4) is a heterotetramer composed of two large adaptins (epsilon-type subunit AP4E1 and beta-type subunit AP4B1), a medium adaptin (mu-type subunit AP4M1) and a small adaptin (sigma-type AP4S1). Interacts with TEPSIN. Interacts with GRIA2; probably indirect it mediates the somatodendritic localization of GRIA2 in neurons. In terms of tissue distribution, widely expressed.

It localises to the golgi apparatus. It is found in the trans-Golgi network membrane. In terms of biological role, component of the adaptor protein complex 4 (AP-4). Adaptor protein complexes are vesicle coat components involved both in vesicle formation and cargo selection. They control the vesicular transport of proteins in different trafficking pathways. AP-4 forms a non clathrin-associated coat on vesicles departing the trans-Golgi network (TGN) and may be involved in the targeting of proteins from the trans-Golgi network (TGN) to the endosomal-lysosomal system. It is also involved in protein sorting to the basolateral membrane in epithelial cells and the proper asymmetric localization of somatodendritic proteins in neurons. AP-4 is involved in the recognition and binding of tyrosine-based sorting signals found in the cytoplasmic part of cargos, but may also recognize other types of sorting signal. The protein is AP-4 complex subunit epsilon-1 of Homo sapiens (Human).